The sequence spans 286 residues: tRNA uridine(34) hydroxylase (286 aa).

The 96-residue stretch at 130–225 (RGDDVVFFDG…YGETFGDRGL (96 aa)) folds into the Rhodanese domain. C185 (cysteine persulfide intermediate) is an active-site residue.

Belongs to the TrhO family.

The enzyme catalyses uridine(34) in tRNA + AH2 + O2 = 5-hydroxyuridine(34) in tRNA + A + H2O. Its function is as follows. Catalyzes oxygen-dependent 5-hydroxyuridine (ho5U) modification at position 34 in tRNAs. This is tRNA uridine(34) hydroxylase from Rhodococcus erythropolis (strain PR4 / NBRC 100887).